The chain runs to 283 residues: Shikimate kinase (283 aa).

86 to 96 contributes to the ATP binding site; the sequence is PIKSGLSSSSA.

It belongs to the GHMP kinase family. Archaeal shikimate kinase subfamily.

The protein resides in the cytoplasm. It carries out the reaction shikimate + ATP = 3-phosphoshikimate + ADP + H(+). It participates in metabolic intermediate biosynthesis; chorismate biosynthesis; chorismate from D-erythrose 4-phosphate and phosphoenolpyruvate: step 5/7. The chain is Shikimate kinase from Methanococcus maripaludis (strain C5 / ATCC BAA-1333).